A 720-amino-acid chain; its full sequence is Dedicator of cytokinesis protein 9 (720 aa).

The DOCKER domain occupies 186 to 638 (KSYASTPELR…LSDIIVPRIC (453 aa)). The tract at residues 277 to 638 (DEEASMMEDV…LSDIIVPRIC (362 aa)) is interaction with CDC42.

This sequence belongs to the DOCK family. As to quaternary structure, homodimer. Interacts preferentially with nucleotide-depleted CDC42.

It localises to the endomembrane system. Functionally, guanine nucleotide-exchange factor (GEF) that activates CDC42 by exchanging bound GDP for free GTP. Overexpression induces filopodia formation. This Rattus norvegicus (Rat) protein is Dedicator of cytokinesis protein 9 (Dock9).